The primary structure comprises 610 residues: Dihydroxy-acid dehydratase (610 aa).

Mg(2+) is bound at residue Asp-81. Cys-122 lines the [2Fe-2S] cluster pocket. Residues Asp-123 and Lys-124 each coordinate Mg(2+). Lys-124 is modified (N6-carboxylysine). Cys-196 is a binding site for [2Fe-2S] cluster. Glu-492 serves as a coordination point for Mg(2+). Residue Ser-518 is the Proton acceptor of the active site.

Belongs to the IlvD/Edd family. Homodimer. [2Fe-2S] cluster is required as a cofactor. Requires Mg(2+) as cofactor.

It carries out the reaction (2R)-2,3-dihydroxy-3-methylbutanoate = 3-methyl-2-oxobutanoate + H2O. The catalysed reaction is (2R,3R)-2,3-dihydroxy-3-methylpentanoate = (S)-3-methyl-2-oxopentanoate + H2O. Its pathway is amino-acid biosynthesis; L-isoleucine biosynthesis; L-isoleucine from 2-oxobutanoate: step 3/4. The protein operates within amino-acid biosynthesis; L-valine biosynthesis; L-valine from pyruvate: step 3/4. Functions in the biosynthesis of branched-chain amino acids. Catalyzes the dehydration of (2R,3R)-2,3-dihydroxy-3-methylpentanoate (2,3-dihydroxy-3-methylvalerate) into 2-oxo-3-methylpentanoate (2-oxo-3-methylvalerate) and of (2R)-2,3-dihydroxy-3-methylbutanoate (2,3-dihydroxyisovalerate) into 2-oxo-3-methylbutanoate (2-oxoisovalerate), the penultimate precursor to L-isoleucine and L-valine, respectively. This is Dihydroxy-acid dehydratase from Ruegeria pomeroyi (strain ATCC 700808 / DSM 15171 / DSS-3) (Silicibacter pomeroyi).